A 128-amino-acid polypeptide reads, in one-letter code: Insoluble matrix shell protein 3 (128 aa).

Positions 1-19 are cleaved as a signal peptide; it reads MLMLLCIIATVIPFSLVEG.

In terms of tissue distribution, component of the acid-insoluble organic matrix of the calcified shell.

The protein resides in the secreted. This chain is Insoluble matrix shell protein 3, found in Ruditapes philippinarum (Japanese carpet shell).